Here is a 227-residue protein sequence, read N- to C-terminus: Cytochrome c oxidase subunit 2 (227 aa).

The Mitochondrial intermembrane segment spans residues 1–14; that stretch reads MAYPVQLGFQDAAS. The chain crosses the membrane as a helical span at residues 15–45; sequence PIMEELLYFHDHTLMIVFLISSLVLYIISLM. The Mitochondrial matrix portion of the chain corresponds to 46–59; the sequence is LTTKLMHTSTMDAQ. A helical membrane pass occupies residues 60 to 87; that stretch reads EVETVWTILPAIILILIALPSLRILYMM. Residues 88-227 are Mitochondrial intermembrane-facing; that stretch reads DEITTPSLTL…HFEEWLLSMF (140 aa). 6 residues coordinate Cu cation: His-161, Cys-196, Glu-198, Cys-200, His-204, and Met-207. Position 198 (Glu-198) interacts with Mg(2+).

Belongs to the cytochrome c oxidase subunit 2 family. In terms of assembly, component of the cytochrome c oxidase (complex IV, CIV), a multisubunit enzyme composed of 14 subunits. The complex is composed of a catalytic core of 3 subunits MT-CO1, MT-CO2 and MT-CO3, encoded in the mitochondrial DNA, and 11 supernumerary subunits COX4I, COX5A, COX5B, COX6A, COX6B, COX6C, COX7A, COX7B, COX7C, COX8 and NDUFA4, which are encoded in the nuclear genome. The complex exists as a monomer or a dimer and forms supercomplexes (SCs) in the inner mitochondrial membrane with NADH-ubiquinone oxidoreductase (complex I, CI) and ubiquinol-cytochrome c oxidoreductase (cytochrome b-c1 complex, complex III, CIII), resulting in different assemblies (supercomplex SCI(1)III(2)IV(1) and megacomplex MCI(2)III(2)IV(2)). Found in a complex with TMEM177, COA6, COX18, COX20, SCO1 and SCO2. Interacts with TMEM177 in a COX20-dependent manner. Interacts with COX20. Interacts with COX16. The cofactor is Cu cation.

The protein resides in the mitochondrion inner membrane. The enzyme catalyses 4 Fe(II)-[cytochrome c] + O2 + 8 H(+)(in) = 4 Fe(III)-[cytochrome c] + 2 H2O + 4 H(+)(out). In terms of biological role, component of the cytochrome c oxidase, the last enzyme in the mitochondrial electron transport chain which drives oxidative phosphorylation. The respiratory chain contains 3 multisubunit complexes succinate dehydrogenase (complex II, CII), ubiquinol-cytochrome c oxidoreductase (cytochrome b-c1 complex, complex III, CIII) and cytochrome c oxidase (complex IV, CIV), that cooperate to transfer electrons derived from NADH and succinate to molecular oxygen, creating an electrochemical gradient over the inner membrane that drives transmembrane transport and the ATP synthase. Cytochrome c oxidase is the component of the respiratory chain that catalyzes the reduction of oxygen to water. Electrons originating from reduced cytochrome c in the intermembrane space (IMS) are transferred via the dinuclear copper A center (CU(A)) of subunit 2 and heme A of subunit 1 to the active site in subunit 1, a binuclear center (BNC) formed by heme A3 and copper B (CU(B)). The BNC reduces molecular oxygen to 2 water molecules using 4 electrons from cytochrome c in the IMS and 4 protons from the mitochondrial matrix. The polypeptide is Cytochrome c oxidase subunit 2 (MT-CO2) (Propithecus tattersalli (Golden-crowned Sifaka)).